Reading from the N-terminus, the 493-residue chain is Arginine decarboxylase (493 aa).

Lys-229 carries the N6-(pyridoxal phosphate)lysine modification.

This sequence belongs to the Orn/Lys/Arg decarboxylase class-I family. Pyridoxal 5'-phosphate is required as a cofactor.

Its subcellular location is the cytoplasm. The catalysed reaction is L-arginine + H(+) = agmatine + CO2. The protein operates within amine and polyamine biosynthesis; agmatine biosynthesis; agmatine from L-arginine: step 1/1. Its function is as follows. Catalyzes the formation of agmatine from arginine. The sequence is that of Arginine decarboxylase (speA) from Bacillus anthracis.